The chain runs to 457 residues: Putative hexose transporter 12 (457 aa).

The Cytoplasmic portion of the chain corresponds to 1–2; sequence MG. Residues 3-23 traverse the membrane as a helical segment; sequence LIVSIFNIGCAIGGIVLSKVG. Topologically, residues 24–29 are extracellular; that stretch reads DIYGRR. The chain crosses the membrane as a helical span at residues 30 to 50; that stretch reads IGLITVTAIYVVGILIQITSI. Topologically, residues 51-60 are cytoplasmic; sequence NKWYQYFIGR. The chain crosses the membrane as a helical span at residues 61-81; that stretch reads IISGIGVGGIAVLSPMLISEV. At 82 to 87 the chain is on the extracellular side; the sequence is APKHIR. Residues 88–108 form a helical membrane-spanning segment; that stretch reads GTLVQLYQLMGTMGIFLGYCT. Residues 109–122 are Cytoplasmic-facing; that stretch reads NYGTKNYHNATQWR. Residues 123-143 traverse the membrane as a helical segment; it reads VGLGLCFAWATFMVSGMMFVP. Over 144–247 the chain is Extracellular; that stretch reads ESPRYLIEVG…KSVGLKDSFQ (104 aa). Asparagine 194 carries N-linked (GlcNAc...) asparagine glycosylation. Residues 248 to 268 traverse the membrane as a helical segment; sequence TSIIIGVVNFFSSFIAVYTIE. Topologically, residues 269 to 274 are cytoplasmic; the sequence is RFGRRT. The helical transmembrane segment at 275-295 threads the bilayer; it reads CLLWGAASMLCCFAVFASVGV. Over 296–319 the chain is Extracellular; the sequence is TKLWPQGSSHQDITSQGAGNCMIV. The chain crosses the membrane as a helical span at residues 320–340; the sequence is FTMFFIFSFATTWAGGCFVIV. Residues 341–353 lie on the Cytoplasmic side of the membrane; sequence SETFPLRAKSRGM. Residues 354–374 form a helical membrane-spanning segment; sequence AIATAANWMWGFLISFFTPFI. At 375 to 379 the chain is on the extracellular side; the sequence is TGAIN. Residues 380–400 form a helical membrane-spanning segment; the sequence is FYYGYVFLGCLVFAYFYVFFF. The Cytoplasmic portion of the chain corresponds to 401 to 457; the sequence is VPETKGLTLEEVNTMWLEGVPAWKSASWVPPERRTADYDADAIDHDNRPIYKRFFSS.

The protein belongs to the major facilitator superfamily. Sugar transporter (TC 2.A.1.1) family.

Its subcellular location is the membrane. Probable glucose transporter. This Saccharomyces cerevisiae (strain ATCC 204508 / S288c) (Baker's yeast) protein is Putative hexose transporter 12 (HXT12).